The primary structure comprises 340 residues: Sulfotransferase ppzF (340 aa).

It functions in the pathway secondary metabolite biosynthesis. Functionally, sulfotransferase; part of the gene cluster that mediates the biosynthesis of pyrrolopyrazines, secondary metabolites showing insecticidal activity. The role of ppzF within the pathway has still to be determined. The single multifunctional NRPS ppzA is sufficient to produce peramine via condensation of 1-pyrroline-5-carboxylate and arginine, N-methylation of the alpha-amino group of arginine and reduction of the thioester and the cyclization to form an iminium ion resulting in release from the peptide synthetase. Deprotonation of this intermediate and oxidation of the pyrroline ring would give rise to peramine. In Epichloe species that produce only peramine, the peramine synthetase gene is not localized in a gene cluster, in contrast to Metarhizium species that contain additional pyrrolopyrazine biosynthesis genes. The 2-oxoglutarate-Fe(II) type oxidoreductase ppzC hydroxylates peramine to yield the newly identified compound 8-hydroxyperamine whereas ppzD converts L-proline into trans-4-hydroxy-L-proline, a precursor of peramine biosynthesis. This chain is Sulfotransferase ppzF, found in Metarhizium majus (strain ARSEF 297).